The chain runs to 329 residues: Peroxidase 5 (329 aa).

Positions 1–26 (MSSKRVTWLSLTWVLVFLCLSVELEA) are cleaved as a signal peptide. The residue at position 27 (Gln-27) is a Pyrrolidone carboxylic acid. 4 cysteine pairs are disulfide-bonded: Cys-37-Cys-117, Cys-70-Cys-75, Cys-123-Cys-324, and Cys-202-Cys-234. The active-site Proton acceptor is His-68. The Ca(2+) site is built by Asp-69, Val-72, Gly-74, Asp-76, and Ser-78. Substrate is bound at residue Pro-165. A heme b-binding site is contributed by His-195. Position 196 (Thr-196) interacts with Ca(2+). A glycan (N-linked (GlcNAc...) asparagine) is linked at Asn-213. Ca(2+)-binding residues include Ser-251 and Asp-256.

This sequence belongs to the peroxidase family. Classical plant (class III) peroxidase subfamily. The cofactor is heme b. Ca(2+) is required as a cofactor.

The protein localises to the secreted. The enzyme catalyses 2 a phenolic donor + H2O2 = 2 a phenolic radical donor + 2 H2O. Removal of H(2)O(2), oxidation of toxic reductants, biosynthesis and degradation of lignin, suberization, auxin catabolism, response to environmental stresses such as wounding, pathogen attack and oxidative stress. These functions might be dependent on each isozyme/isoform in each plant tissue. The sequence is that of Peroxidase 5 from Vitis vinifera (Grape).